Here is a 33-residue protein sequence, read N- to C-terminus: Cytochrome b6-f complex subunit 8 (33 aa).

The helical transmembrane segment at 2–22 (LITLGWASLAALFSFSIAMVV) threads the bilayer.

The protein belongs to the PetN family. As to quaternary structure, the 4 large subunits of the cytochrome b6-f complex are cytochrome b6, subunit IV (17 kDa polypeptide, PetD), cytochrome f and the Rieske protein, while the 4 small subunits are PetG, PetL, PetM and PetN. The complex functions as a dimer.

It localises to the plastid. The protein resides in the organellar chromatophore thylakoid membrane. In terms of biological role, component of the cytochrome b6-f complex, which mediates electron transfer between photosystem II (PSII) and photosystem I (PSI), cyclic electron flow around PSI, and state transitions. The sequence is that of Cytochrome b6-f complex subunit 8 from Paulinella chromatophora.